Reading from the N-terminus, the 777-residue chain is Zinc finger protein 786 (777 aa).

The region spanning 9 to 80 (LTFEDVAIYF…WGEKKKPDKE (72 aa)) is the KRAB domain. The C2H2-type 1; degenerate zinc finger occupies 194 to 216 (NSCPVCRENSWEKNHLVKQQKGH). The C2H2-type 2 zinc-finger motif lies at 240–262 (ISCLGCGKSFRLKQYLVRHLDIH). The C2H2-type 3; degenerate zinc finger occupies 268–291 (PQCPKCKMCFHHERTLFSHHLKNS). The C2H2-type 4; degenerate zinc finger occupies 420 to 442 (VFCRKCGQGFTKHCGLTEHTRIL). C2H2-type zinc fingers lie at residues 448-470 (FWCA…QRLH), 476-498 (FQCT…QLQH), 504-526 (FSCS…LRVH), 532-554 (FQCP…QRIH), 560-582 (FSCG…FRVH), 588-610 (FQCP…QRLH), 616-638 (FQCP…QLLH), 644-665 (FSCQ…MRTH), 671-693 (FQCP…QGLH), 699-721 (FHCP…QRIH), and 727-749 (FACG…IRVH).

This sequence belongs to the krueppel C2H2-type zinc-finger protein family.

The protein localises to the nucleus. May be involved in transcriptional regulation. The protein is Zinc finger protein 786 (Znf786) of Mus musculus (Mouse).